The chain runs to 559 residues: Apolipoprotein N-acyltransferase 2 (559 aa).

Transmembrane regions (helical) follow at residues 27-47 (LAGS…GFLL), 53-73 (HVAC…SFWL), 86-106 (ASTV…ACIL), 114-134 (ACAF…GILA), 153-173 (IADI…NACV), and 187-207 (VPVF…SLYG). Residues 221–507 (LALAIVQQNA…SAVLHVPVYP (287 aa)) enclose the CN hydrolase domain. Residue glutamate 288 is the Proton acceptor of the active site. Residue lysine 358 is part of the active site. Cysteine 416 (nucleophile) is an active-site residue. A helical membrane pass occupies residues 519-539 (WVIVLCALIFFAEGVRMAVHT).

This sequence belongs to the CN hydrolase family. Apolipoprotein N-acyltransferase subfamily.

Its subcellular location is the cell inner membrane. The enzyme catalyses N-terminal S-1,2-diacyl-sn-glyceryl-L-cysteinyl-[lipoprotein] + a glycerophospholipid = N-acyl-S-1,2-diacyl-sn-glyceryl-L-cysteinyl-[lipoprotein] + a 2-acyl-sn-glycero-3-phospholipid + H(+). It participates in protein modification; lipoprotein biosynthesis (N-acyl transfer). Functionally, catalyzes the phospholipid dependent N-acylation of the N-terminal cysteine of apolipoprotein, the last step in lipoprotein maturation. This Treponema pallidum (strain Nichols) protein is Apolipoprotein N-acyltransferase 2.